We begin with the raw amino-acid sequence, 759 residues long: MNKPVLPPPGGPDDGDRILDEPLTEALSRRYLAYALSTIGSRALPDVRDGLKPVHRRVLYAMSNMRLNPDAAARKCAKVVGEVMGNFHPHGDASIYDALVRLAQEFSQRIPLVEGQGNFGNIDGDSAAAMRYTECKMTEAAMLLLDGIDEDAVDFRPTYDGQDEEPVVLPSGFPNLLANGSSGIAVGMATSIPPHNAAELIDACQLLLANPDATTADLLEKVPGPDFPTGGVIVESRASLLETYETGRGGVRMRAKWEKEDTGRGTYQIVVTEIPYQVKKSDLVEQLADLIDSKKAALLGDVRDESAEDIRLVLEPKSKNVEPEVLMESLFKLSALESRFPVNINVLDARGTPGVMGIKQALMAFLAHRREVLTRRARHRLAKIEARLHILDGLLIAYLNLDEVIRIVRYEDKPKEKLIETFGLTDIQADAILNTRLRQLAKLEEMEIRREHAELVEERDGILAMLASEAKQWKLVGVGLSEVRAALLKIKHPLDKPRPTGVTGRSVFGEAPQVDADAAIEAMIVREPITIILSERGWIRAAKGKIDDPSELKFKEGDKLGFLVPAETTDKLLIFSSDGRFFTLGCDKLPSARGHGEPVRMMIELDDKVKIIDVFPFKAGRKRILASKGGYGFLMPEEEALANRKAGKQVLNVGNEGAAFCLEAVGDQLAVIGDNGKILIFPLEELPEMPRGKGVKLQAYREGGLRDGLSFNAETGAYWIDTAGRRRDWAEWKEWVGRRAGAGKLVPKGFATNKRFRPK.

The Topo IIA-type catalytic domain occupies 44 to 516; the sequence is LPDVRDGLKP…VFGEAPQVDA (473 aa). The active-site O-(5'-phospho-DNA)-tyrosine intermediate is Tyr-132.

It belongs to the type II topoisomerase GyrA/ParC subunit family. ParC type 1 subfamily. As to quaternary structure, heterotetramer composed of ParC and ParE.

It is found in the cell membrane. It catalyses the reaction ATP-dependent breakage, passage and rejoining of double-stranded DNA.. Topoisomerase IV is essential for chromosome segregation. It relaxes supercoiled DNA. Performs the decatenation events required during the replication of a circular DNA molecule. The polypeptide is DNA topoisomerase 4 subunit A (Caulobacter vibrioides (strain ATCC 19089 / CIP 103742 / CB 15) (Caulobacter crescentus)).